The primary structure comprises 555 residues: Formate--tetrahydrofolate ligase (555 aa).

65–72 (TPAGEGKS) is a binding site for ATP.

It belongs to the formate--tetrahydrofolate ligase family.

It catalyses the reaction (6S)-5,6,7,8-tetrahydrofolate + formate + ATP = (6R)-10-formyltetrahydrofolate + ADP + phosphate. It functions in the pathway one-carbon metabolism; tetrahydrofolate interconversion. The sequence is that of Formate--tetrahydrofolate ligase from Staphylococcus epidermidis (strain ATCC 35984 / DSM 28319 / BCRC 17069 / CCUG 31568 / BM 3577 / RP62A).